The following is a 273-amino-acid chain: 4-hydroxy-tetrahydrodipicolinate reductase (273 aa).

Residues 12-17 and Glu-38 each bind NAD(+); that span reads GAGGRM. Arg-39 provides a ligand contact to NADP(+). Residues 102–104 and 126–129 contribute to the NAD(+) site; these read GTT and AANF. Residue His-159 is the Proton donor/acceptor of the active site. Position 160 (His-160) interacts with (S)-2,3,4,5-tetrahydrodipicolinate. The Proton donor role is filled by Lys-163. Position 169–170 (169–170) interacts with (S)-2,3,4,5-tetrahydrodipicolinate; it reads GT.

This sequence belongs to the DapB family. As to quaternary structure, homotetramer.

It localises to the cytoplasm. It catalyses the reaction (S)-2,3,4,5-tetrahydrodipicolinate + NAD(+) + H2O = (2S,4S)-4-hydroxy-2,3,4,5-tetrahydrodipicolinate + NADH + H(+). The enzyme catalyses (S)-2,3,4,5-tetrahydrodipicolinate + NADP(+) + H2O = (2S,4S)-4-hydroxy-2,3,4,5-tetrahydrodipicolinate + NADPH + H(+). The protein operates within amino-acid biosynthesis; L-lysine biosynthesis via DAP pathway; (S)-tetrahydrodipicolinate from L-aspartate: step 4/4. In terms of biological role, catalyzes the conversion of 4-hydroxy-tetrahydrodipicolinate (HTPA) to tetrahydrodipicolinate. The polypeptide is 4-hydroxy-tetrahydrodipicolinate reductase (Shigella boydii serotype 4 (strain Sb227)).